Reading from the N-terminus, the 79-residue chain is M-myrmicitoxin(01)-Tb1a (79 aa).

An N-terminal signal peptide occupies residues 1–26 (MKLSFLSLVLAIILVMALMYTPHAEA). A propeptide spanning residues 27 to 56 (KAWADADADATAAADADADAVADALADAVA) is cleaved from the precursor. Residue V76 is modified to Valine amide.

It belongs to the formicidae venom precursor-01 superfamily. Post-translationally, the C-terminal amidation is important for antimicrobial activity, since a non-amidated synthetic peptide shows a reduced antimicrobial activity (2-20-fold depending on the strain tested). The amidation may play a positive role in the peptide conformation, since amidated peptide shows an increase of about 5% of helical content. In terms of tissue distribution, expressed by the venom gland.

It localises to the secreted. Its subcellular location is the target cell membrane. Functionally, antimicrobial peptide that shows antimicrobial activities against all microorganisms tested with minimal inhibitory concentrations (MICs) values ranging from 0.45 to 97.5 umol/L. This peptide kills the microorganisms by permeabilizating the membranes. It shows a very weak hemolytic activity (HC(50)=325 umol/L) and weak cytotoxicity against human lymphocytes (LC(50)=67.8 umol/L). Gram-negative bacteria tested are E.coli (MIC=24.4 umol/L), C.sakazakii (MIC=5.8 umol/L), P.aeruginosa (MIC=8.7-12.2 umol/L), S.enterica (MIC=5.4 umol/L), and H.pylori (MIC=0.99-3.9 umol/L). Gram-positive bacteria tested are E.hirae (MIC=12.2 umol/L), S.aureus (MIC=3.0-6.4 umol/L), methicillin-resistant S.aureus (MRSA) (MIC=8.7 umol/L), S.xylosus (MIC=0.45-1.3 umol/L), and B.subtilis (MIC=24.4 umol/L). Fungi tested are A.niger (MIC=0.75 umol/L), C.albicans (MIC=17.3 umol/L), G.candidum (MIC=97.5 umol/L), and S.cerevisiae (MIC=6.1 umol/L). Finally the parasite tested is L.infantum (MIC=1.5 umol/L). The chain is M-myrmicitoxin(01)-Tb1a from Tetramorium bicarinatum (Tramp ant).